The chain runs to 323 residues: MRALAVVVVATAFAVVAVRGEQCGSQAGGALCPNCLCCSQYGWCGSTSAYCGSGCQSQCSGSCGGGGPTPPSGGGGSGVASIVSRSLFDQMLLHRNDAACPAKNFYTYDAFVAAANAFPSFATTGDAATRKREVAAFLAQTSHETTGGWATAPDGPYSWGYCFKEENNGNVGSDYCVQSSQWPCAAGKKYYGRGPIQISYNYNYGPAGQAIGSNLLSNPDLVASDATVSFKTAFWFWMTPQSPKPSCHAVMTGQWTPNGNDQAAGRVPGYGVVTNIINGGVECGHGADSRVADRIGFYKRYCDMLGVSYGANLDCYNQRPFNS.

The N-terminal stretch at 1-20 (MRALAVVVVATAFAVVAVRG) is a signal peptide. Positions 21-61 (EQCGSQAGGALCPNCLCCSQYGWCGSTSAYCGSGCQSQCSG) constitute a Chitin-binding type-1 domain. 8 disulfides stabilise this stretch: cysteine 23/cysteine 38, cysteine 32/cysteine 44, cysteine 35/cysteine 63, cysteine 37/cysteine 51, cysteine 55/cysteine 59, cysteine 100/cysteine 162, cysteine 176/cysteine 184, and cysteine 283/cysteine 315. The active-site Proton donor is the glutamate 144.

It belongs to the glycosyl hydrolase 19 family. Chitinase class I subfamily. As to expression, expressed in roots, leaves, sheaths and meristems.

It catalyses the reaction Random endo-hydrolysis of N-acetyl-beta-D-glucosaminide (1-&gt;4)-beta-linkages in chitin and chitodextrins.. Functionally, hydrolyzes chitin and may play a role in defense against fungal pathogens containing chitin. The chain is Chitinase 1 (Cht1) from Oryza sativa subsp. japonica (Rice).